Reading from the N-terminus, the 39-residue chain is Photosystem II reaction center protein J (39 aa).

Residues Ile7–Phe27 form a helical membrane-spanning segment.

It belongs to the PsbJ family. As to quaternary structure, PSII is composed of 1 copy each of membrane proteins PsbA, PsbB, PsbC, PsbD, PsbE, PsbF, PsbH, PsbI, PsbJ, PsbK, PsbL, PsbM, PsbT, PsbX, PsbY, PsbZ, Psb30/Ycf12, peripheral proteins PsbO, CyanoQ (PsbQ), PsbU, PsbV and a large number of cofactors. It forms dimeric complexes.

The protein localises to the cellular thylakoid membrane. In terms of biological role, one of the components of the core complex of photosystem II (PSII). PSII is a light-driven water:plastoquinone oxidoreductase that uses light energy to abstract electrons from H(2)O, generating O(2) and a proton gradient subsequently used for ATP formation. It consists of a core antenna complex that captures photons, and an electron transfer chain that converts photonic excitation into a charge separation. The protein is Photosystem II reaction center protein J of Cyanothece sp. (strain PCC 7425 / ATCC 29141).